The primary structure comprises 154 residues: 6,7-dimethyl-8-ribityllumazine synthase (154 aa).

5-amino-6-(D-ribitylamino)uracil-binding positions include Phe23, 57 to 59, and 81 to 83; these read AFE and AVI. (2S)-2-hydroxy-3-oxobutyl phosphate is bound at residue 86 to 87; the sequence is ST. The active-site Proton donor is the His89. Position 114 (Phe114) interacts with 5-amino-6-(D-ribitylamino)uracil. A (2S)-2-hydroxy-3-oxobutyl phosphate-binding site is contributed by Arg128.

The protein belongs to the DMRL synthase family.

The catalysed reaction is (2S)-2-hydroxy-3-oxobutyl phosphate + 5-amino-6-(D-ribitylamino)uracil = 6,7-dimethyl-8-(1-D-ribityl)lumazine + phosphate + 2 H2O + H(+). It functions in the pathway cofactor biosynthesis; riboflavin biosynthesis; riboflavin from 2-hydroxy-3-oxobutyl phosphate and 5-amino-6-(D-ribitylamino)uracil: step 1/2. Catalyzes the formation of 6,7-dimethyl-8-ribityllumazine by condensation of 5-amino-6-(D-ribitylamino)uracil with 3,4-dihydroxy-2-butanone 4-phosphate. This is the penultimate step in the biosynthesis of riboflavin. The polypeptide is 6,7-dimethyl-8-ribityllumazine synthase (Syntrophotalea carbinolica (strain DSM 2380 / NBRC 103641 / GraBd1) (Pelobacter carbinolicus)).